Here is a 67-residue protein sequence, read N- to C-terminus: DNA-directed RNA polymerase subunit omega (67 aa).

The protein belongs to the RNA polymerase subunit omega family. The RNAP catalytic core consists of 2 alpha, 1 beta, 1 beta' and 1 omega subunit. When a sigma factor is associated with the core the holoenzyme is formed, which can initiate transcription.

It catalyses the reaction RNA(n) + a ribonucleoside 5'-triphosphate = RNA(n+1) + diphosphate. Its function is as follows. Promotes RNA polymerase assembly. Latches the N- and C-terminal regions of the beta' subunit thereby facilitating its interaction with the beta and alpha subunits. This is DNA-directed RNA polymerase subunit omega from Albidiferax ferrireducens (strain ATCC BAA-621 / DSM 15236 / T118) (Rhodoferax ferrireducens).